The sequence spans 373 residues: Dual-specificity RNA methyltransferase RlmN (373 aa).

Glu94 acts as the Proton acceptor in catalysis. A Radical SAM core domain is found at 100-339; it reads EDDRATLCVS…VIVRKTRGDD (240 aa). A disulfide bond links Cys107 and Cys344. Residues Cys114, Cys118, and Cys121 each coordinate [4Fe-4S] cluster. S-adenosyl-L-methionine is bound by residues 168-169, Ser200, 222-224, and Asn301; these read GE and SIH. The active-site S-methylcysteine intermediate is Cys344.

Belongs to the radical SAM superfamily. RlmN family. The cofactor is [4Fe-4S] cluster.

It is found in the cytoplasm. It catalyses the reaction adenosine(2503) in 23S rRNA + 2 reduced [2Fe-2S]-[ferredoxin] + 2 S-adenosyl-L-methionine = 2-methyladenosine(2503) in 23S rRNA + 5'-deoxyadenosine + L-methionine + 2 oxidized [2Fe-2S]-[ferredoxin] + S-adenosyl-L-homocysteine. The catalysed reaction is adenosine(37) in tRNA + 2 reduced [2Fe-2S]-[ferredoxin] + 2 S-adenosyl-L-methionine = 2-methyladenosine(37) in tRNA + 5'-deoxyadenosine + L-methionine + 2 oxidized [2Fe-2S]-[ferredoxin] + S-adenosyl-L-homocysteine. Specifically methylates position 2 of adenine 2503 in 23S rRNA and position 2 of adenine 37 in tRNAs. m2A2503 modification seems to play a crucial role in the proofreading step occurring at the peptidyl transferase center and thus would serve to optimize ribosomal fidelity. The chain is Dual-specificity RNA methyltransferase RlmN from Shewanella amazonensis (strain ATCC BAA-1098 / SB2B).